Reading from the N-terminus, the 96-residue chain is Large ribosomal subunit protein eL21 (96 aa).

The tract at residues 1–37 (MPSSNGPMTGTRDKLSNSPRERGMSPPQRAIQEYDEG) is disordered. The span at 11–23 (TRDKLSNSPRERG) shows a compositional bias: basic and acidic residues.

Belongs to the eukaryotic ribosomal protein eL21 family.

This Haloquadratum walsbyi (strain DSM 16790 / HBSQ001) protein is Large ribosomal subunit protein eL21.